A 107-amino-acid polypeptide reads, in one-letter code: uncharacterized protein (107 aa).

Residues 23-64 (SASSSSSTRIPSGFASATSSKSNSSTKSSPSPINSFNNKTNN) are disordered. Positions 37-57 (ASATSSKSNSSTKSSPSPINS) are enriched in low complexity. A helical transmembrane segment spans residues 76–98 (LAFGIVEFMVFNGMISTITTTTF).

The protein localises to the membrane. This is an uncharacterized protein from Dictyostelium discoideum (Social amoeba).